An 856-amino-acid chain; its full sequence is DNA mismatch repair protein MutS (856 aa).

An ATP-binding site is contributed by 618-625 (GPNMGGKS).

Belongs to the DNA mismatch repair MutS family.

Functionally, this protein is involved in the repair of mismatches in DNA. It is possible that it carries out the mismatch recognition step. This protein has a weak ATPase activity. This Shewanella putrefaciens (strain CN-32 / ATCC BAA-453) protein is DNA mismatch repair protein MutS.